The primary structure comprises 30 residues: Dicynthaurin (30 aa).

Threonine amide is present on Thr30.

Homodimer.

The protein resides in the secreted. Functionally, shows antibacterial activity against both Gram-positive and Gram-negative bacteria. Its antimicrobial activity is optimal at NaCl concentrations below 100 mM, suggesting that the antimicrobial actions of this peptide may take place intracellularly rather than extracellularly. Has no activity against the fungus C.albicans. Has modest hemolytic activity. This Halocynthia aurantium (Sea peach) protein is Dicynthaurin.